The primary structure comprises 587 residues: Phosphatidate phosphatase APP1 (587 aa).

Disordered stretches follow at residues Met1 to Lys28 and Pro150 to Arg178. Composition is skewed to low complexity over residues Ser9–Gly22 and Ser163–Lys174. Residues Asp281–Thr285 carry the DXDXT motif motif. The segment at Gln452 to Asn521 is disordered. The interaction with SH3 domain of ABP1 stretch occupies residues Arg467 to Thr483.

In terms of assembly, monomer. Interacts with ABP1. The cofactor is Mg(2+). Post-translationally, N-glycosylated.

Its subcellular location is the cytoplasm. It is found in the cytoskeleton. The protein resides in the actin patch. It carries out the reaction a 1,2-diacyl-sn-glycero-3-phosphate + H2O = a 1,2-diacyl-sn-glycerol + phosphate. It catalyses the reaction 1,2-di-(9Z-octadecenoyl)-sn-glycero-3-phosphate + H2O = 1,2-di-(9Z-octadecenoyl)-sn-glycerol + phosphate. Inhibited by N-ethylmaleimide. Mg(2+)-dependent phosphatidate (PA) phosphatase which catalyzes the dephosphorylation of PA to yield diacylglycerol. May play a role in vesicular trafficking through its PAP activity at cortical actin patches. Can also utilize diacylglycerol pyrophosphate and lyso-PA as substrates with specificity constants 4- and 7-fold lower, respectively, when compared with PA. This Saccharomyces cerevisiae (strain ATCC 204508 / S288c) (Baker's yeast) protein is Phosphatidate phosphatase APP1 (APP1).